A 624-amino-acid polypeptide reads, in one-letter code: E3 ubiquitin-protein ligase RLIM (624 aa).

Met-1 bears the N-acetylmethionine mark. Positions Met-1–Ser-11 are enriched in basic and acidic residues. 5 disordered regions span residues Met-1–Arg-25, Lys-72–Phe-251, Asn-257–Ser-276, Thr-291–Phe-363, and Ser-424–Glu-522. A compositionally biased stretch (polar residues) spans Ser-104–Ser-132. Low complexity predominate over residues Asn-142–Glu-153. Ser-164 bears the Phosphoserine mark. Residues Gly-165–Pro-188 show a composition bias toward polar residues. Ser-195, Ser-228, Ser-230, and Ser-276 each carry phosphoserine. The span at Arg-214–Arg-229 shows a compositional bias: basic and acidic residues. Over residues Thr-291–Arg-315 the composition is skewed to polar residues. Residues Arg-329–Ile-339 show a composition bias toward basic and acidic residues. Residues Ala-340–Tyr-356 are compositionally biased toward polar residues. Residues Gly-445–Ser-454 are compositionally biased toward gly residues. A compositionally biased stretch (low complexity) spans Ser-455–Gly-507. The segment at Cys-570–Arg-611 adopts an RING-type zinc-finger fold. The short motif at Glu-621–Val-624 is the PDZ-binding element.

The protein belongs to the RNF12 family. As to quaternary structure, interacts with LIM/homeobox factors such as LHX3. Interacts with LDB1, LDB2 and SIN3A. Interacts with LIMK1. Interacts (via N-terminus) with TERF1. Interacts (via C-terminus) with ESR1. Expressed in many tissues.

Its subcellular location is the nucleus. The catalysed reaction is S-ubiquitinyl-[E2 ubiquitin-conjugating enzyme]-L-cysteine + [acceptor protein]-L-lysine = [E2 ubiquitin-conjugating enzyme]-L-cysteine + N(6)-ubiquitinyl-[acceptor protein]-L-lysine.. The protein operates within protein modification; protein ubiquitination. In terms of biological role, E3 ubiquitin-protein ligase. Acts as a negative coregulator for LIM homeodomain transcription factors by mediating the ubiquitination and subsequent degradation of LIM cofactors LDB1 and LDB2 and by mediating the recruitment the SIN3a/histone deacetylase corepressor complex. Ubiquitination and degradation of LIM cofactors LDB1 and LDB2 allows DNA-bound LIM homeodomain transcription factors to interact with other protein partners such as RLIM. Plays a role in telomere length-mediated growth suppression by mediating the ubiquitination and degradation of TERF1. By targeting ZFP42 for degradation, acts as an activator of random inactivation of X chromosome in the embryo, a stochastic process in which one X chromosome is inactivated to minimize sex-related dosage differences of X-encoded genes in somatic cells of female placental mammals. The sequence is that of E3 ubiquitin-protein ligase RLIM (RLIM) from Homo sapiens (Human).